The following is a 256-amino-acid chain: Ribonuclease T2 (256 aa).

An N-terminal signal peptide occupies residues 1–24 (MRPAALRGALLGCLCLALLCLGGA). A disulfide bond links C48 and C55. The active site involves H65. Disulfide bonds link C75–C121, C184–C241, and C202–C213. N-linked (GlcNAc...) asparagine glycans are attached at residues N76 and N106. Residues E114 and H118 contribute to the active site. An N-linked (GlcNAc...) asparagine glycan is attached at N212.

This sequence belongs to the RNase T2 family. In terms of tissue distribution, ubiquitous. Higher expression levels observed in the temporal lobe and fetal brain.

The protein localises to the secreted. It is found in the lysosome lumen. The protein resides in the endoplasmic reticulum lumen. Its subcellular location is the mitochondrion intermembrane space. The enzyme catalyses a ribonucleotidyl-ribonucleotide-RNA + H2O = a 3'-end 3'-phospho-ribonucleotide-RNA + a 5'-end dephospho-ribonucleoside-RNA + H(+). The catalysed reaction is an adenylyl-uridine-RNA = a 3'-end 2',3'-cyclophospho-AMP-RNA + a 5'-end dephospho-uridine-RNA. It catalyses the reaction a guanylyl-uridine-RNA = a 3'-end 2',3'-cyclophospho-GMP-RNA + a 5'-end dephospho-uridine-RNA. Its activity is regulated as follows. Inhibited by Zn(2+) and Cu(2+). Its function is as follows. Ribonuclease that plays an essential role in innate immune response by recognizing and degrading RNAs from microbial pathogens that are subsequently sensed by TLR8. Cleaves preferentially single-stranded RNA molecules between purine and uridine residues, which critically contributes to the supply of catabolic uridine and the generation of purine-2',3'-cyclophosphate-terminated oligoribonucleotides. In turn, RNase T2 degradation products promote the RNA-dependent activation of TLR8. In plasmacytoid dendritic cells, it cooperates with PLD3 or PLD4 5'-&gt;3' exonucleases to process RNA fragments and release 2',3'-cyclic guanosine monophosphate (2',3'-cGMP), a potent stimulatory ligand for TLR7. Also plays a key role in degradation of mitochondrial RNA and processing of non-coding RNA imported from the cytosol into mitochondria. Participates as well in degradation of mitochondrion-associated cytosolic rRNAs. This chain is Ribonuclease T2 (RNASET2), found in Homo sapiens (Human).